A 586-amino-acid polypeptide reads, in one-letter code: Nucleus accumbens-associated protein 2 (586 aa).

The 65-residue stretch at 30 to 94 (CDVSIVVKGQ…CYTGKLTMAA (65 aa)) folds into the BTB domain. Residue Lys171 forms a Glycyl lysine isopeptide (Lys-Gly) (interchain with G-Cter in SUMO2) linkage. The disordered stretch occupies residues 177–196 (MPPASGPGLASKRPLETGPR). Lys215 participates in a covalent cross-link: Glycyl lysine isopeptide (Lys-Gly) (interchain with G-Cter in SUMO2). The segment at 236-272 (QVPYPPGERTSPGASSLPTTDSPTSYHNEEDEEDDEA) is disordered. The segment covering 247–261 (PGASSLPTTDSPTSY) has biased composition (polar residues). Glycyl lysine isopeptide (Lys-Gly) (interchain with G-Cter in SUMO2) cross-links involve residues Lys297, Lys427, and Lys454. The region spanning 349-446 (GSGVYITRGQ…DMCTNARRVR (98 aa)) is the BEN domain. A disordered region spans residues 542 to 586 (APEQLPADGQSSPQAFEQGNTSSSRPQTPVATATRRPEGTYAGTL). Over residues 550-572 (GQSSPQAFEQGNTSSSRPQTPVA) the composition is skewed to polar residues.

As to quaternary structure, homooligomer; mediated by the BTB domain. Interacts with the NuRD complex. Interacts (via C-terminal part) with HDAC2. Interacts (via BTB domain) with MTA1, MTA2 and MTA3.

The protein localises to the nucleus. In terms of biological role, functions as a transcriptional repressor through its association with the NuRD complex. Recruits the NuRD complex to the promoter of MDM2, leading to the repression of MDM2 transcription and subsequent stability of p53/TP53. This chain is Nucleus accumbens-associated protein 2 (Nacc2), found in Mus musculus (Mouse).